A 470-amino-acid polypeptide reads, in one-letter code: Beta-Ala-Xaa dipeptidase (470 aa).

His-87 lines the Zn(2+) pocket. Asp-89 is a catalytic residue. Asp-119 provides a ligand contact to Zn(2+). Glu-153 functions as the Proton acceptor in the catalytic mechanism. 2 residues coordinate Zn(2+): Glu-154 and Asp-177. Residue Arg-350 participates in substrate binding. His-439 is a binding site for Zn(2+).

This sequence belongs to the peptidase M20A family. Zn(2+) is required as a cofactor.

It is found in the cytoplasm. Fully inhibited by 1,10-phenanthroline or EDTA. In terms of biological role, is a relatively unspecific dipeptidase cleaving a variety of dipeptides, notably those with an N-terminal beta-Ala or D-Ala residue, e.g. carnosine (beta-Ala-His). To a lesser extent, also shows aminopeptidase activity, since it is able to catalyze the removal of the N-terminal amino acid from a few distinct tripeptides. The polypeptide is Beta-Ala-Xaa dipeptidase (pepV) (Lactobacillus delbrueckii subsp. lactis).